The sequence spans 384 residues: Glucans biosynthesis protein C (384 aa).

10 helical membrane-spanning segments follow: residues 17 to 37 (AWLMLLGIPFHISLIYSTHSW), 54 to 74 (FIHAFRMQVFFVISGYFSYML), 91 to 111 (VGIPMLTAIPLLTLPQFILLQ), 140 to 160 (LWFLLVLVILTTVSIGIFTWF), 173 to 193 (AISLAKLSLIFFLLGIAYAAI), 212 to 232 (FIVMQTLFYVPFFILGALAFI), 240 to 260 (FTTPSRGCTLGAAVAFIAYLL), 274 to 294 (TESVITMVMGLWMVNVVFSLG), 311 to 331 (ASLFIYLVHHPLTLFFGAYIT), and 338 to 358 (LIGFLCGLIFVMGIALILYEI).

This sequence belongs to the acyltransferase 3 family. OpgC subfamily.

It is found in the cell membrane. It participates in glycan metabolism; osmoregulated periplasmic glucan (OPG) biosynthesis. Functionally, necessary for the succinyl substitution of periplasmic glucans. Could catalyze the transfer of succinyl residues from the cytoplasmic side of the membrane to the nascent glucan backbones on the periplasmic side of the membrane. The chain is Glucans biosynthesis protein C from Salmonella schwarzengrund (strain CVM19633).